The primary structure comprises 460 residues: MASRFFALLLLAIPIQAQSPVWGQCGGIGWSGPTTCVGGATCVSYNPYYSQCIPSTQASSSIASTTLVTSFTTTTATRTSASTPPASSTGAGGATCSALPGSITLRSNAKLNDLFTMFNGDKVTTKDKFSCRQAEMSELIQRYELGTLPGRPSTLTASFSGNTLTINCGEAGKSISFTVTITYPSSGTAPYPAIIGYGGGSLPAPAGVAMINFNNDNIAAQVNTGSRGQGKFYDLYGSSHSAGAMTAWAWGVSRVIDALELVPGARIDTTKIGVTGCSRNGKGAMVAGAFEKRIVLTLPQESGAGGSACWRISDYLKSQGANIQTASEIIGEDPWFSTTFNSYVNQVPVLPFDHHSLAALIAPRGLFVIDNNIDWLGPQSCFGCMTAAHMAWQALGVSDHMGYSQIGAHAHCAFPSNQQSQLTAFVQKFLLGQSTNTAIFQSDFSANQSQWIDWTTPTLS.

The N-terminal stretch at 1–17 is a signal peptide; it reads MASRFFALLLLAIPIQA. Glutamine 18 bears the Pyrrolidone carboxylic acid mark. Residues 18–53 enclose the CBM1 domain; that stretch reads QSPVWGQCGGIGWSGPTTCVGGATCVSYNPYYSQCI. Intrachain disulfides connect cysteine 96–cysteine 131, cysteine 277–cysteine 412, and cysteine 309–cysteine 384. A GXSYXG catalytic site motif motif is present at residues 276-281; sequence GCSRNG. Catalysis depends on serine 278, which acts as the Nucleophile. Substrate-binding residues include lysine 282, glutamine 324, glutamate 332, and tryptophan 375. The active-site Proton donor/acceptor is histidine 411. Asparagine 447 carries an N-linked (GlcNAc...) asparagine glycan.

The protein belongs to the carbohydrate esterase 15 (CE15) family.

It is found in the secreted. The catalysed reaction is a 4-O-methyl-alpha-D-glucuronosyl ester derivative + H2O = 4-O-methyl-alpha-D-glucuronate derivative + an alcohol + H(+). In terms of biological role, glucuronoyl esterase which may play a significant role in biomass degradation, as it is considered to disconnect hemicellulose from lignin through the hydrolysis of the ester bond between 4-O-methyl-D-glucuronic acid residues of glucuronoxylans and aromatic alcohols of lignin. Does not hydrolyze substrates of other carbohydrate esterases such as acetylxylan esterase, acetyl esterase and feruloyl esterase. The polypeptide is 4-O-methyl-glucuronoyl methylesterase (Hypocrea jecorina (strain QM6a) (Trichoderma reesei)).